The following is a 1530-amino-acid chain: Neurexin-1 (1530 aa).

An N-terminal signal peptide occupies residues Met-1–Gly-30. A Laminin G-like 1 domain is found at Leu-31 to Gly-212. At Leu-31 to Thr-1454 the chain is on the extracellular side. N-linked (GlcNAc...) asparagine glycosylation is found at Asn-125 and Asn-190. The interval Ser-199–Glu-221 is disordered. The region spanning Gly-213–Ser-256 is the EGF-like 1 domain. Cystine bridges form between Cys-228–Cys-243 and Cys-245–Cys-255. Laminin G-like domains follow at residues Ile-299–Cys-496 and Asp-503–Cys-695. Ca(2+)-binding residues include Asp-345, Leu-362, and Met-430. Disulfide bonds link Cys-460-Cys-496, Cys-666-Cys-695, Cys-703-Cys-714, Cys-708-Cys-723, and Cys-725-Cys-735. Positions Thr-699–Glu-736 constitute an EGF-like 2 domain. A glycan (O-linked (Glc...) serine) is linked at Ser-705. Laminin G-like domains follow at residues Val-741 to Cys-914 and Asp-928 to Cys-1103. Ca(2+) is bound by residues Asp-788 and Leu-805. N-linked (GlcNAc...) asparagine glycosylation occurs at Asn-813. Arg-864 is a binding site for Ca(2+). Disulfide bonds link Cys-906–Cys-914, Cys-1075–Cys-1103, Cys-1110–Cys-1121, Cys-1115–Cys-1130, and Cys-1132–Cys-1142. One can recognise an EGF-like 3 domain in the interval Pro-1106–Asn-1143. Residues Tyr-1149–Val-1347 enclose the Laminin G-like 6 domain. Residues Asp-1199 and Val-1216 each coordinate Ca(2+). An N-linked (GlcNAc...) asparagine glycan is attached at Asn-1246. Positions 1298 and 1300 each coordinate Ca(2+). Residue Ser-1408 is glycosylated (O-linked (Xyl...) (heparan sulfate) serine). The disordered stretch occupies residues Cys-1411–Ser-1443. Residues Gly-1455–Met-1475 form a helical membrane-spanning segment. Topologically, residues Tyr-1476–Val-1530 are cytoplasmic. The tract at residues Asn-1497–Asn-1523 is interaction with CASK. The tract at residues Asn-1497–Val-1530 is disordered.

This sequence belongs to the neurexin family. In terms of assembly, interacts (via laminin G-like domain 2 and/or laminin G-like domain 6) with NLGN1 forming a heterotetramer, where one NLGN1 dimer interacts with one NRXN1 dimer. Also interacts (via laminin G-like domain 2 and/or laminin G-like domain 6) with NLGN2, NLGN3 and NLGN4L; interactions with NLGN1, NLGN2, NLGN3 and NLGN4L are calcium-dependent. Interacts (via cytoplasmic C-terminal region) with CASK (via the PDZ, SH3 and guanylate kinase-like domains). Interacts (via cytoplasmic C-terminus) with CASKIN1 and APBA1. Interacts (via laminin G-like domain 2) with NXPH1 and NXPH3. Alpha-type isoforms (neurexin-1-alpha) interact (via laminin G-like domain 2 and/or laminin G-like domain 6) with DAG1 (via alpha-dystroglycan chain). Interacts with LRRTM1, LRRTM2, LRRTM3 and LRRTM4. Interacts with SYT13 and SYTL1. Interacts with CBLN1, CBLN2 and, less avidly, with CBLN4. Interacts with CLSTN3. Alpha-type isoforms interact with alpha-latrotoxin from spider venom. O-glycosylated; contains heparan sulfate. Heparan sulfate attachment is required for synapse development by mediating interactions with neuroligins and LRRTM2.

Its subcellular location is the presynaptic cell membrane. Functionally, cell surface protein involved in cell-cell-interactions, exocytosis of secretory granules and regulation of signal transmission. Function is isoform-specific. Alpha-type isoforms have a long N-terminus with six laminin G-like domains and play an important role in synaptic signal transmission. Alpha-type isoforms play a role in the regulation of calcium channel activity and Ca(2+)-triggered neurotransmitter release at synapses and at neuromuscular junctions. They play an important role in Ca(2+)-triggered exocytosis of secretory granules in pituitary gland. They may affect their functions at synapses and in endocrine cells via their interactions with proteins from the exocytotic machinery. Likewise, alpha-type isoforms play a role in regulating the activity of postsynaptic NMDA receptors, a subtype of glutamate-gated ion channels. Both alpha-type and beta-type isoforms may play a role in the formation or maintenance of synaptic junctions via their interactions (via the extracellular domains) with neuroligin family members, CBLN1 or CBLN2. In vitro, triggers the de novo formation of presynaptic structures. May be involved in specification of excitatory synapses. Alpha-type isoforms were first identified as receptors for alpha-latrotoxin from spider venom. The polypeptide is Neurexin-1 (NRXN1) (Bos taurus (Bovine)).